The sequence spans 608 residues: Signal transduction histidine-protein kinase AtoS (608 aa).

Over 1–15 (MHYMKWIYPRRLRNQ) the chain is Cytoplasmic. A helical transmembrane segment spans residues 16 to 36 (MILMAILMVIVPTLTIGYIVE). Topologically, residues 37-189 (TEGRSAVLSE…DIRRQAWKMD (153 aa)) are periplasmic. Residues 190 to 210 (VRIIIVLTAGLLISLLLIVLF) traverse the membrane as a helical segment. The Cytoplasmic segment spans residues 211-608 (SRRLSANIDI…PINPQGNQTV (398 aa)). The HAMP domain maps to 212-262 (RRLSANIDIITDGLSTLAQNIPTRLPQLPGEMGQISQSVNNLAQALRETRT). The PAS domain maps to 260-305 (TRTLNDLIIENAADGVIAIDRQGDVTTMNPAAEVITGYQRHELVGQ). Residues 326 to 382 (HGTEHVALEISFPGRDRTIELSVTTSRIHNTHGEMIGALVIFSDLTARKETQRRMAQ) enclose the PAC domain. A Histidine kinase domain is found at 395-602 (GVAHEVRNPL…TFTLILPINP (208 aa)). Histidine 398 carries the post-translational modification Phosphohistidine; by autocatalysis.

As to quaternary structure, homodimer. Autophosphorylated. Each AtoS molecule may phosphorylate its partner within the dimer rather than phosphorylating itself.

Its subcellular location is the cell inner membrane. The catalysed reaction is ATP + protein L-histidine = ADP + protein N-phospho-L-histidine.. Member of the two-component regulatory system AtoS/AtoC. In the presence of acetoacetate, AtoS/AtoC stimulates the expression of the atoDAEB operon, leading to short chain fatty acid catabolism and activation of the poly-(R)-3-hydroxybutyrate (cPHB) biosynthetic pathway. Also induces the operon in response to spermidine. Involved in the regulation of motility and chemotaxis, via transcriptional induction of the flagellar regulon. AtoS is a membrane-associated kinase that phosphorylates and activates AtoC in response to environmental signals. The chain is Signal transduction histidine-protein kinase AtoS (atoS) from Escherichia coli (strain K12).